The following is a 474-amino-acid chain: tRNA-2-methylthio-N(6)-dimethylallyladenosine synthase (474 aa).

One can recognise an MTTase N-terminal domain in the interval 3-120; that stretch reads KKLHIKTWGC…LPEMIEQIQQ (118 aa). 6 residues coordinate [4Fe-4S] cluster: C12, C49, C83, C157, C161, and C164. Residues 143-375 enclose the Radical SAM core domain; it reads RAEGPSAFVS…QDRITQQAMR (233 aa). One can recognise a TRAM domain in the interval 378 to 441; it reads RQMLGTVQRI…TNSLRGKFIR (64 aa).

The protein belongs to the methylthiotransferase family. MiaB subfamily. In terms of assembly, monomer. [4Fe-4S] cluster serves as cofactor.

It localises to the cytoplasm. The enzyme catalyses N(6)-dimethylallyladenosine(37) in tRNA + (sulfur carrier)-SH + AH2 + 2 S-adenosyl-L-methionine = 2-methylsulfanyl-N(6)-dimethylallyladenosine(37) in tRNA + (sulfur carrier)-H + 5'-deoxyadenosine + L-methionine + A + S-adenosyl-L-homocysteine + 2 H(+). In terms of biological role, catalyzes the methylthiolation of N6-(dimethylallyl)adenosine (i(6)A), leading to the formation of 2-methylthio-N6-(dimethylallyl)adenosine (ms(2)i(6)A) at position 37 in tRNAs that read codons beginning with uridine. This Shewanella loihica (strain ATCC BAA-1088 / PV-4) protein is tRNA-2-methylthio-N(6)-dimethylallyladenosine synthase.